We begin with the raw amino-acid sequence, 159 residues long: Urease accessory protein UreE (159 aa).

It belongs to the UreE family.

It localises to the cytoplasm. In terms of biological role, involved in urease metallocenter assembly. Binds nickel. Probably functions as a nickel donor during metallocenter assembly. The chain is Urease accessory protein UreE from Acinetobacter baylyi (strain ATCC 33305 / BD413 / ADP1).